We begin with the raw amino-acid sequence, 260 residues long: MIPALWIAKTGLDAQQINMNVIANNLANVNTNGFKRSKAIFEDLIYHTVQQPGSKSSEETISPSGFQLGTGVRPITTEREHSQGNLSKTNSLKDVAINGNGFFQVQLPDGNAAYTRDGSFQINPNGQLVTNNGFLIQPVINFPANGNNMSVSRDGIITVRIPEQTQPIRVGKLYLANFVNDSGLSNIGENLYQETEASGNPSISSPGSHGTGLLYQSYVETSNVNIAEELVNMIQAQRAYEINSKVITTADQMLQKLSLL.

Residues 52 to 67 (PGSKSSEETISPSGFQ) show a composition bias toward polar residues. The segment at 52-71 (PGSKSSEETISPSGFQLGTG) is disordered.

This sequence belongs to the flagella basal body rod proteins family. In terms of assembly, the basal body constitutes a major portion of the flagellar organelle and consists of four rings (L,P,S, and M) mounted on a central rod. The rod consists of about 26 subunits of FlgG in the distal portion, and FlgB, FlgC and FlgF are thought to build up the proximal portion of the rod with about 6 subunits each.

The protein resides in the bacterial flagellum basal body. In Buchnera aphidicola subsp. Baizongia pistaciae (strain Bp), this protein is Flagellar basal-body rod protein FlgG (flgG).